Here is a 772-residue protein sequence, read N- to C-terminus: Calcium-binding mitochondrial carrier protein (772 aa).

The segment at 1–377 (MFANRVRQAQ…SISDFEKSTG (377 aa)) is N-terminal domain. 4 EF-hand domains span residues 132–165 (LDADKFKVLFQMADVDHTGYISFDEYVMFDELMA), 166–201 (KPEAEYFLAFKLFDRDGNGYISKNDFKHVITASLDP), 235–270 (LQQERIKQEFKFHDKYNSGYIPRDKFAKVLGSVKLR), and 347–382 (ITPLEIDLIFHLFDLNKDGKLSISDFEKSTGLNINK). Residues D145, D147, T149, Y151, E156, D179, D181, N183, Y185, and D190 each contribute to the Ca(2+) site. Residues D360, N362, D364, K366, and D371 each contribute to the Ca(2+) site. Residues 378–422 (LNINKIGGGTNYSDSYPSDSHVTIQNSSTTPSPSTPITNTAAAIA) are linker loop domain. The segment at 432–720 (AQQVLESIEN…KALLPDAEYK (289 aa)) is carrier domain. 3 Solcar repeats span residues 436–526 (LESI…LRDL), 535–616 (IYFP…MKTI), and 624–712 (LGPM…LQKA). The next 6 helical transmembrane spans lie at 442 to 459 (FALGSIAGGIGAAAVYPI), 501 to 520 (GILPQMVGVAPEKAIKLTVN), 545 to 558 (GFAGMSQVCVTNPL), 591 to 610 (GAGACLLRDIPFSAIYFPTY), 630 to 647 (LLAGAVAGIPAASLVTPA), and 687 to 706 (GALARVFRSSPQFGVTLVSY). The tract at residues 721 to 772 (PPTNAPITQKDFDVIRGNTNTVQRVIDMESKFGTLHQTRDNNKSSNGGENKN) is C-terminal domain. Positions 751–772 (KFGTLHQTRDNNKSSNGGENKN) are disordered. Low complexity predominate over residues 763–772 (KSSNGGENKN).

Belongs to the mitochondrial carrier (TC 2.A.29) family. As to quaternary structure, homodimer (via N-terminus).

The protein resides in the mitochondrion inner membrane. Functionally, mitochondrial and calcium-binding carrier that catalyzes the calcium-dependent exchange of cytoplasmic glutamate with mitochondrial aspartate across the mitochondrial inner membrane. The chain is Calcium-binding mitochondrial carrier protein (mcfO) from Dictyostelium discoideum (Social amoeba).